We begin with the raw amino-acid sequence, 82 residues long: Cytochrome b559 subunit alpha (82 aa).

The chain crosses the membrane as a helical span at residues valine 22 to phenylalanine 36. A heme-binding site is contributed by histidine 24.

It belongs to the PsbE/PsbF family. In terms of assembly, heterodimer of an alpha subunit and a beta subunit. PSII is composed of 1 copy each of membrane proteins PsbA, PsbB, PsbC, PsbD, PsbE, PsbF, PsbH, PsbI, PsbJ, PsbK, PsbL, PsbM, PsbT, PsbX, PsbY, PsbZ, Psb30/Ycf12, peripheral proteins PsbO, CyanoQ (PsbQ), PsbU, PsbV and a large number of cofactors. It forms dimeric complexes. The cofactor is heme b.

It is found in the cellular thylakoid membrane. In terms of biological role, this b-type cytochrome is tightly associated with the reaction center of photosystem II (PSII). PSII is a light-driven water:plastoquinone oxidoreductase that uses light energy to abstract electrons from H(2)O, generating O(2) and a proton gradient subsequently used for ATP formation. It consists of a core antenna complex that captures photons, and an electron transfer chain that converts photonic excitation into a charge separation. The polypeptide is Cytochrome b559 subunit alpha (Synechococcus sp. (strain WH7803)).